Here is a 396-residue protein sequence, read N- to C-terminus: MAKAKFERNKPHCNIGTIGHVDHGKTSLTAAITKILAETGGATFTAYDQIDKAPEEKARGITISTAHVEYETQNRHYAHVDCPGHADYVKNMITGAAQMDGAILVVSAADGPMPQTREHILLARQVGVPALVVFLNKCDMVDDPELLELVELEVRELLSKYEFPGDKIPIIKGSALAALEDSDKKLGHDAILELMRNVDEYIPQPERPIDQPFLMPVEDVFSISGRGTVVTGRVERGVIKVGEEIEIVGIRPTQKTTVTGVEMFRKLLDQGQAGDNIGALLRGTKREDVERGQVLCKPGSVKPHTKFKAEAYILTKEEGGRHTPFFTNYRPQFYFRTTDVTGVVHLPEGTEMVMPGDNIAMEVHLIVPIAMEEKLRFAIREGGRTVGAGVVASIIE.

The tr-type G domain maps to 10-206 (KPHCNIGTIG…NVDEYIPQPE (197 aa)). A G1 region spans residues 19-26 (GHVDHGKT). 19–26 (GHVDHGKT) is a GTP binding site. Thr-26 contributes to the Mg(2+) binding site. The G2 stretch occupies residues 60–64 (GITIS). The interval 81–84 (DCPG) is G3. Residues 81–85 (DCPGH) and 136–139 (NKCD) each bind GTP. The tract at residues 136-139 (NKCD) is G4. Residues 174-176 (SAL) are G5.

The protein belongs to the TRAFAC class translation factor GTPase superfamily. Classic translation factor GTPase family. EF-Tu/EF-1A subfamily. In terms of assembly, monomer.

It localises to the cytoplasm. The enzyme catalyses GTP + H2O = GDP + phosphate + H(+). In terms of biological role, GTP hydrolase that promotes the GTP-dependent binding of aminoacyl-tRNA to the A-site of ribosomes during protein biosynthesis. The chain is Elongation factor Tu from Bradyrhizobium sp. (strain BTAi1 / ATCC BAA-1182).